The sequence spans 222 residues: 7-cyano-7-deazaguanine synthase (222 aa).

14–24 (FSGGQDSTTCL) provides a ligand contact to ATP. The Zn(2+) site is built by Cys190, Cys199, Cys202, and Cys205.

This sequence belongs to the QueC family. As to quaternary structure, homodimer. The cofactor is Zn(2+).

It carries out the reaction 7-carboxy-7-deazaguanine + NH4(+) + ATP = 7-cyano-7-deazaguanine + ADP + phosphate + H2O + H(+). It functions in the pathway purine metabolism; 7-cyano-7-deazaguanine biosynthesis. Its function is as follows. Catalyzes the ATP-dependent conversion of 7-carboxy-7-deazaguanine (CDG) to 7-cyano-7-deazaguanine (preQ(0)). This Staphylococcus aureus (strain bovine RF122 / ET3-1) protein is 7-cyano-7-deazaguanine synthase.